Reading from the N-terminus, the 116-residue chain is Aspartate 1-decarboxylase (116 aa).

Serine 25 (schiff-base intermediate with substrate; via pyruvic acid) is an active-site residue. Residue serine 25 is modified to Pyruvic acid (Ser). Threonine 57 provides a ligand contact to substrate. The Proton donor role is filled by tyrosine 58. Glycine 73–alanine 75 contributes to the substrate binding site.

This sequence belongs to the PanD family. In terms of assembly, heterooctamer of four alpha and four beta subunits. The cofactor is pyruvate. In terms of processing, is synthesized initially as an inactive proenzyme, which is activated by self-cleavage at a specific serine bond to produce a beta-subunit with a hydroxyl group at its C-terminus and an alpha-subunit with a pyruvoyl group at its N-terminus.

Its subcellular location is the cytoplasm. The enzyme catalyses L-aspartate + H(+) = beta-alanine + CO2. Its pathway is cofactor biosynthesis; (R)-pantothenate biosynthesis; beta-alanine from L-aspartate: step 1/1. Functionally, catalyzes the pyruvoyl-dependent decarboxylation of aspartate to produce beta-alanine. This Parabacteroides distasonis (strain ATCC 8503 / DSM 20701 / CIP 104284 / JCM 5825 / NCTC 11152) protein is Aspartate 1-decarboxylase.